A 331-amino-acid chain; its full sequence is Flotillin-like protein FloA (331 aa).

2 helical membrane-spanning segments follow: residues 6–26 (LMIL…FTFV) and 28–48 (VMLW…TLVG). The tract at residues 236–331 (QTDQAEADKN…KDPSDEDRKS (96 aa)) is required for correct localization. Short sequence motifs (EA repeat) lie at residues 240-242 (AEA), 251-253 (AEE), 278-282 (EAEAE), and 288-290 (AEA). Positions 312–331 (EMRDSFGKLTKDPSDEDRKS) are disordered.

The protein belongs to the flotillin-like FloA family. As to quaternary structure, homooligomerizes. Interacts with FloT. Interacts with FtsH midcell. Interacts with PhoR, colocalizes with PhoR in FloA-only membrane rafts.

The protein resides in the cell membrane. The protein localises to the membrane raft. Found in functional membrane microdomains (FMM) that may be equivalent to eukaryotic membrane rafts. FMMs are highly dynamic and increase in number as cells age. FloA and FloT function is partially redundant; double deletions have marked synthetic phenotypes. Flotillins are thought to be important factors in membrane fluidity, especially during periods of rapid growth in rich media. Whether specific proteins are associated with FMMs is controversial; in one study FloT rafts have been shown to include proteins involved in adaptation to stationary phase, while FloA-FloT rafts include proteins involved in differentiation including sporulation, biofilm formation and DNA uptake competence. Another (more finely resolved) study only showed association of NfeD2 with FloT rafts of all the proteins examined. Involved in spatial organization of membranes, perhaps recruiting proteins to specific membrane regions. Simultaneous overexpression of both FloA and FloT leads to defects in cell division and differentiation, in part caused by stabilization of FtsH and its subsequent increased ability to degrade proteins. Cells make more biofilm, are about half as long, have less EzrA and more frequent Z-rings. The chain is Flotillin-like protein FloA from Bacillus subtilis (strain 168).